A 102-amino-acid chain; its full sequence is Small ribosomal subunit protein uS10 (102 aa).

Belongs to the universal ribosomal protein uS10 family. Part of the 30S ribosomal subunit.

In terms of biological role, involved in the binding of tRNA to the ribosomes. The sequence is that of Small ribosomal subunit protein uS10 from Mesorhizobium japonicum (strain LMG 29417 / CECT 9101 / MAFF 303099) (Mesorhizobium loti (strain MAFF 303099)).